We begin with the raw amino-acid sequence, 591 residues long: Cytidine monophosphate-N-acetylneuraminic acid hydroxylase (591 aa).

Positions Leu12–Leu110 constitute a Rieske domain. Residues Cys52, His54, Cys73, and His76 each contribute to the [2Fe-2S] cluster site.

Belongs to the CMP-Neu5Ac hydroxylase family. [2Fe-2S] cluster serves as cofactor.

The protein localises to the cytoplasm. It carries out the reaction CMP-N-acetyl-beta-neuraminate + 2 Fe(II)-[cytochrome b5] + O2 + 2 H(+) = CMP-N-glycoloyl-beta-neuraminate + 2 Fe(III)-[cytochrome b5] + H2O. Its pathway is amino-sugar metabolism; N-acetylneuraminate metabolism. In terms of biological role, sialic acids are components of carbohydrate chains of glycoconjugates and are involved in cell-cell recognition and cell-pathogen interactions. Catalyzes the conversion of CMP-N-acetylneuraminic acid (CMP-Neu5Ac) into its hydroxylated derivative CMP-N-glycolylneuraminic acid (CMP-Neu5Gc), a sialic acid abundantly expressed at the surface of many cells. The chain is Cytidine monophosphate-N-acetylneuraminic acid hydroxylase (cmah) from Danio rerio (Zebrafish).